The following is a 147-amino-acid chain: Small ribosomal subunit protein bS6 (147 aa).

The disordered stretch occupies residues 103–147 (AARMAANLPSFPEDEDTEEKGSAPLAREEEGIGEEAQTDEAEDKE). The segment covering 133-147 (GIGEEAQTDEAEDKE) has biased composition (acidic residues).

It belongs to the bacterial ribosomal protein bS6 family.

Functionally, binds together with bS18 to 16S ribosomal RNA. This chain is Small ribosomal subunit protein bS6, found in Syntrophobacter fumaroxidans (strain DSM 10017 / MPOB).